We begin with the raw amino-acid sequence, 327 residues long: Phenylalanine--tRNA ligase alpha subunit (327 aa).

Mg(2+) is bound at residue Glu252.

The protein belongs to the class-II aminoacyl-tRNA synthetase family. Phe-tRNA synthetase alpha subunit type 1 subfamily. As to quaternary structure, tetramer of two alpha and two beta subunits. Mg(2+) serves as cofactor.

The protein localises to the cytoplasm. The catalysed reaction is tRNA(Phe) + L-phenylalanine + ATP = L-phenylalanyl-tRNA(Phe) + AMP + diphosphate + H(+). The polypeptide is Phenylalanine--tRNA ligase alpha subunit (Escherichia coli O139:H28 (strain E24377A / ETEC)).